The chain runs to 520 residues: GMP synthase [glutamine-hydrolyzing] (520 aa).

Positions 9–202 constitute a Glutamine amidotransferase type-1 domain; the sequence is HVLIVDFGSQ…THKIAGLKGD (194 aa). Residue C86 is the Nucleophile of the active site. Active-site residues include H176 and E178. The region spanning 203 to 395 is the GMPS ATP-PPase domain; that stretch reads WTMKAFREEA…LGLPPQFVGR (193 aa). 230–236 provides a ligand contact to ATP; the sequence is SGGVDSS.

In terms of assembly, homodimer.

The enzyme catalyses XMP + L-glutamine + ATP + H2O = GMP + L-glutamate + AMP + diphosphate + 2 H(+). Its pathway is purine metabolism; GMP biosynthesis; GMP from XMP (L-Gln route): step 1/1. Functionally, catalyzes the synthesis of GMP from XMP. This chain is GMP synthase [glutamine-hydrolyzing], found in Phenylobacterium zucineum (strain HLK1).